Consider the following 317-residue polypeptide: tRNA(Ile)-lysidine synthase (317 aa).

Position 30-35 (Ser-30–Ser-35) interacts with ATP.

It belongs to the tRNA(Ile)-lysidine synthase family.

The protein localises to the cytoplasm. The catalysed reaction is cytidine(34) in tRNA(Ile2) + L-lysine + ATP = lysidine(34) in tRNA(Ile2) + AMP + diphosphate + H(+). In terms of biological role, ligates lysine onto the cytidine present at position 34 of the AUA codon-specific tRNA(Ile) that contains the anticodon CAU, in an ATP-dependent manner. Cytidine is converted to lysidine, thus changing the amino acid specificity of the tRNA from methionine to isoleucine. The sequence is that of tRNA(Ile)-lysidine synthase from Chlamydia caviae (strain ATCC VR-813 / DSM 19441 / 03DC25 / GPIC) (Chlamydophila caviae).